The sequence spans 70 residues: DNA gyrase inhibitor YacG (70 aa).

Positions 9, 12, 28, and 32 each coordinate Zn(2+). Residues 44-70 (SRKIPGSSIDPESIVTTNNKQDNVDEQ) are disordered.

This sequence belongs to the DNA gyrase inhibitor YacG family. In terms of assembly, interacts with GyrB. Requires Zn(2+) as cofactor.

In terms of biological role, inhibits all the catalytic activities of DNA gyrase by preventing its interaction with DNA. Acts by binding directly to the C-terminal domain of GyrB, which probably disrupts DNA binding by the gyrase. This is DNA gyrase inhibitor YacG from Legionella pneumophila subsp. pneumophila (strain Philadelphia 1 / ATCC 33152 / DSM 7513).